The sequence spans 301 residues: Homoserine O-acetyltransferase (301 aa).

Cys142 functions as the Acyl-thioester intermediate in the catalytic mechanism. Substrate-binding residues include Lys163 and Ser192. His235 serves as the catalytic Proton acceptor. Glu237 is a catalytic residue. Arg249 is a substrate binding site.

Belongs to the MetA family.

The protein resides in the cytoplasm. It catalyses the reaction L-homoserine + acetyl-CoA = O-acetyl-L-homoserine + CoA. It functions in the pathway amino-acid biosynthesis; L-methionine biosynthesis via de novo pathway; O-acetyl-L-homoserine from L-homoserine: step 1/1. Transfers an acetyl group from acetyl-CoA to L-homoserine, forming acetyl-L-homoserine. The chain is Homoserine O-acetyltransferase from Bacillus thuringiensis subsp. konkukian (strain 97-27).